The chain runs to 1282 residues: ATP-dependent helicase/nuclease subunit A (1282 aa).

The region spanning 10 to 481 (SKWTDSQRQV…IELQENFRSS (472 aa)) is the UvrD-like helicase ATP-binding domain. 31–38 (AGAGAGKT) provides a ligand contact to ATP. A UvrD-like helicase C-terminal domain is found at 516-820 (KPRELYLNED…RLMSIHKSKG (305 aa)).

The protein belongs to the helicase family. AddA subfamily. As to quaternary structure, heterodimer of AddA and AddB/RexB. Mg(2+) is required as a cofactor.

It carries out the reaction Couples ATP hydrolysis with the unwinding of duplex DNA by translocating in the 3'-5' direction.. The catalysed reaction is ATP + H2O = ADP + phosphate + H(+). In terms of biological role, the heterodimer acts as both an ATP-dependent DNA helicase and an ATP-dependent, dual-direction single-stranded exonuclease. Recognizes the chi site generating a DNA molecule suitable for the initiation of homologous recombination. The AddA nuclease domain is required for chi fragment generation; this subunit has the helicase and 3' -&gt; 5' nuclease activities. In Natranaerobius thermophilus (strain ATCC BAA-1301 / DSM 18059 / JW/NM-WN-LF), this protein is ATP-dependent helicase/nuclease subunit A.